The sequence spans 502 residues: uncharacterized protein (502 aa).

The helical transmembrane segment at 1–21 (MKIFLVILSVFFFNGCFGLAY) threads the bilayer. 2 consecutive PLD phosphodiesterase domains span residues 162-189 (IKKR…GDNY) and 396-423 (TKHS…DPRS).

This sequence belongs to the phospholipase D family. Cardiolipin synthase subfamily.

The protein localises to the cell membrane. This is an uncharacterized protein from Helicobacter pylori (strain J99 / ATCC 700824) (Campylobacter pylori J99).